We begin with the raw amino-acid sequence, 398 residues long: Spermatogenesis associated 6-like protein (398 aa).

Positions 170-215 (KLNGPANNRKKKPKEKNSDQLSKGTPFWGPSPQRLHLHRPTQRNPG) are disordered. Serine 269 and serine 272 each carry phosphoserine.

It belongs to the SPATA6 family.

The protein is Spermatogenesis associated 6-like protein (Spata6l) of Rattus norvegicus (Rat).